The following is a 532-amino-acid chain: Probable alpha-galactosidase A (532 aa).

The signal sequence occupies residues 1-21; that stretch reads MDTTKSLLSTLIAIMIPLSLG. C44 and C76 form a disulfide bridge. 3 N-linked (GlcNAc...) asparagine glycosylation sites follow: N47, N91, and N121. C124 and C154 are disulfide-bonded. The Nucleophile role is filled by D152. The N-linked (GlcNAc...) asparagine glycan is linked to N201. Catalysis depends on D210, which acts as the Proton donor. One can recognise a Ricin B-type lectin domain in the interval 410 to 531; the sequence is CSTVIPTGIV…GLPSGVDIKP (122 aa). Disulfide bonds link C427-C441 and C466-C478.

The protein belongs to the glycosyl hydrolase 27 family.

The protein resides in the secreted. It carries out the reaction Hydrolysis of terminal, non-reducing alpha-D-galactose residues in alpha-D-galactosides, including galactose oligosaccharides, galactomannans and galactolipids.. Functionally, hydrolyzes a variety of simple alpha-D-galactoside as well as more complex molecules such as oligosaccharides and polysaccharides. The polypeptide is Probable alpha-galactosidase A (aglA) (Aspergillus fumigatus (strain ATCC MYA-4609 / CBS 101355 / FGSC A1100 / Af293) (Neosartorya fumigata)).